Here is a 320-residue protein sequence, read N- to C-terminus: O(6)-methylguanine-induced apoptosis 2 (320 aa).

Positions 46–91 (LNESPGPGSYLSHSPAEGCSPSFSKRGTGSFASKGGRVPRSFQRLS) are disordered. STPGR repeat units lie at residues 49–82 (SPGP…KGGR), 91–103 (SPGP…QMSL), 132–163 (NPAP…KTRR), 173–192 (GPSP…SPQA), 213–233 (PGPG…TVLP), 254–266 (PGPG…NYNR), and 294–305 (PGPGFYEPTVLS). Residues 66–76 (PSFSKRGTGSF) show a composition bias toward polar residues. A disordered region spans residues 207–226 (PVRNNIPGPGTYNPHQPPEP).

It belongs to the STPG1 family.

The protein resides in the cytoplasm. It is found in the nucleus. Its function is as follows. May positively contribute to the induction of apoptosis triggered by O(6)-methylguanine. This chain is O(6)-methylguanine-induced apoptosis 2 (stpg1), found in Danio rerio (Zebrafish).